Reading from the N-terminus, the 146-residue chain is Hemoglobin subunit beta (146 aa).

Valine 1 is modified (N-acetylvaline). In terms of domain architecture, Globin spans 2–146; it reads HLSADEKNAL…VANALAHKYH (145 aa). A Phosphoserine modification is found at serine 44. Lysine 59 carries the N6-acetyllysine modification. Histidine 63 is a heme b binding site. Lysine 82 is modified (N6-acetyllysine). A heme b-binding site is contributed by histidine 92. S-nitrosocysteine is present on cysteine 93. The residue at position 144 (lysine 144) is an N6-acetyllysine.

Belongs to the globin family. Heterotetramer of two alpha chains and two beta chains. Red blood cells.

Functionally, involved in oxygen transport from the lung to the various peripheral tissues. The chain is Hemoglobin subunit beta from Sciurus carolinensis (Eastern gray squirrel).